The following is a 257-amino-acid chain: UPF0246 protein KPK_4750 (257 aa).

The protein belongs to the UPF0246 family.

This is UPF0246 protein KPK_4750 from Klebsiella pneumoniae (strain 342).